We begin with the raw amino-acid sequence, 350 residues long: Biotin synthase (350 aa).

A Radical SAM core domain is found at 41 to 268 (NEVQISRLLS…KSRVRLSAGR (228 aa)). Cysteine 56, cysteine 60, and cysteine 63 together coordinate [4Fe-4S] cluster. Residues cysteine 100, cysteine 131, cysteine 191, and arginine 263 each contribute to the [2Fe-2S] cluster site.

This sequence belongs to the radical SAM superfamily. Biotin synthase family. Homodimer. It depends on [4Fe-4S] cluster as a cofactor. The cofactor is [2Fe-2S] cluster.

The catalysed reaction is (4R,5S)-dethiobiotin + (sulfur carrier)-SH + 2 reduced [2Fe-2S]-[ferredoxin] + 2 S-adenosyl-L-methionine = (sulfur carrier)-H + biotin + 2 5'-deoxyadenosine + 2 L-methionine + 2 oxidized [2Fe-2S]-[ferredoxin]. It functions in the pathway cofactor biosynthesis; biotin biosynthesis; biotin from 7,8-diaminononanoate: step 2/2. Functionally, catalyzes the conversion of dethiobiotin (DTB) to biotin by the insertion of a sulfur atom into dethiobiotin via a radical-based mechanism. The sequence is that of Biotin synthase from Shewanella sp. (strain ANA-3).